The primary structure comprises 121 residues: Small ribosomal subunit protein uS13 (121 aa).

The tract at residues 93–121 is disordered; the sequence is RHLPVRGQNTKNNARTRKGPAVSIAGKKK.

It belongs to the universal ribosomal protein uS13 family. As to quaternary structure, part of the 30S ribosomal subunit. Forms a loose heterodimer with protein S19. Forms two bridges to the 50S subunit in the 70S ribosome.

In terms of biological role, located at the top of the head of the 30S subunit, it contacts several helices of the 16S rRNA. In the 70S ribosome it contacts the 23S rRNA (bridge B1a) and protein L5 of the 50S subunit (bridge B1b), connecting the 2 subunits; these bridges are implicated in subunit movement. Contacts the tRNAs in the A and P-sites. The protein is Small ribosomal subunit protein uS13 of Ligilactobacillus salivarius (strain UCC118) (Lactobacillus salivarius).